Consider the following 188-residue polypeptide: MFHQIWAALLYFYGIILNSIYQCPEHSQLTTLGVDGKEFPEVHLGQWYFIAGAAPTKEELATFDPVDNIVFNMAAGSAPMQLHLRATIRMKDGLCVPRKWIYHLTEGSTDLRTEGRPDMKTELFSSSCPGGIMLNETGQGYQRFLLYNRSPHPPEKCVEEFKSLTSCLDSKAFLLTPRNQEACELSNN.

Positions 1–22 (MFHQIWAALLYFYGIILNSIYQ) form a signal peptide, not cleaved. Cystine bridges form between Cys-23–Cys-167, Cys-95–Cys-183, and Cys-128–Cys-157. N-linked (GlcNAc...) asparagine glycosylation is present at Asn-135. Tetradecanoate-binding residues include Glu-136 and Arg-143.

The protein belongs to the calycin superfamily. Lipocalin family. Highly divergent. Interacts with LRP2; LRP2 mediates APOM renal uptake and subsequent lysosomal degradation. As to expression, plasma protein. Expressed in liver and kidney.

Its subcellular location is the secreted. Functionally, probably involved in lipid transport. Can bind sphingosine-1-phosphate, myristic acid, palmitic acid and stearic acid, retinol, all-trans-retinoic acid and 9-cis-retinoic acid. The chain is Apolipoprotein M (APOM) from Homo sapiens (Human).